Consider the following 762-residue polypeptide: 5-methyltetrahydropteroyltriglutamate--homocysteine methyltransferase (762 aa).

Residues 17 to 20 (REWK) and lysine 111 each bind 5-methyltetrahydropteroyltri-L-glutamate. Residues 435–437 (IGS) and glutamate 488 each bind L-homocysteine. L-methionine contacts are provided by residues 435 to 437 (IGS) and glutamate 488. Residues 519–520 (RC) and tryptophan 565 contribute to the 5-methyltetrahydropteroyltri-L-glutamate site. Aspartate 603 contributes to the L-homocysteine binding site. An L-methionine-binding site is contributed by aspartate 603. Glutamate 609 provides a ligand contact to 5-methyltetrahydropteroyltri-L-glutamate. The Zn(2+) site is built by histidine 645, cysteine 647, and glutamate 669. Histidine 698 serves as the catalytic Proton donor. Residue cysteine 730 coordinates Zn(2+).

The protein belongs to the vitamin-B12 independent methionine synthase family. Requires Zn(2+) as cofactor.

It catalyses the reaction 5-methyltetrahydropteroyltri-L-glutamate + L-homocysteine = tetrahydropteroyltri-L-glutamate + L-methionine. The protein operates within amino-acid biosynthesis; L-methionine biosynthesis via de novo pathway; L-methionine from L-homocysteine (MetE route): step 1/1. In terms of biological role, catalyzes the transfer of a methyl group from 5-methyltetrahydrofolate to homocysteine resulting in methionine formation. The sequence is that of 5-methyltetrahydropteroyltriglutamate--homocysteine methyltransferase from Bacillus cereus (strain AH187).